The primary structure comprises 195 residues: Thymidine kinase (195 aa).

Residues 15-22 (GSMFSGKS) and 88-91 (DEVQ) each bind ATP. Glutamate 89 acts as the Proton acceptor in catalysis. Zn(2+) is bound by residues cysteine 145, cysteine 148, cysteine 183, and residue 186.

It belongs to the thymidine kinase family. As to quaternary structure, homotetramer.

It is found in the cytoplasm. It catalyses the reaction thymidine + ATP = dTMP + ADP + H(+). The chain is Thymidine kinase from Bacillus cereus (strain ATCC 10987 / NRS 248).